The sequence spans 506 residues: Transcriptional coactivator YAP1 (506 aa).

A compositionally biased stretch (pro residues) spans 1 to 38 (MDPGPPPPAAPPQAQGPPSAPPPPGQAPPSAPGPPAPP). The interval 1–60 (MDPGPPPPAAPPQAQGPPSAPPPPGQAPPSAPGPPAPPGSQAAPQAPPAGHQIVHVRGDS) is disordered. The segment covering 39 to 50 (GSQAAPQAPPAG) has biased composition (low complexity). At Ser-60 the chain carries Phosphoserine. Position 62 is a phosphothreonine (Thr-62). A disordered region spans residues 90–112 (LPDSFFKPPEPKAHSRQASTDAG). Residues Ser-104 and Ser-108 each carry the phosphoserine modification. Thr-109 and Thr-118 each carry phosphothreonine. Ser-126, Ser-127, Ser-130, and Ser-137 each carry phosphoserine. The interval 132-160 (QLGAVSPGTLTPTGVSSGPAAAPSAQHLR) is disordered. The segment covering 147-156 (SSGPAAAPSA) has biased composition (low complexity). At Ser-163 the chain carries Phosphoserine. WW domains follow at residues 170-204 (VPLPAGWEMAKTSSGQRYFLNHIDQTTTWQDPRKA) and 230-263 (PLPDGWEQAMTQDGEIYYINHKNKTTSWLDPRLD). Phosphoserine is present on residues Ser-273, Ser-288, Ser-369, Ser-373, Ser-384, Ser-390, Ser-399, Ser-402, and Ser-405. Disordered stretches follow at residues 274–307 (QSAPVKQPPPLAPQSPPGVLGGGGSSQQQQMRLQ) and 356–416 (TLEQ…RTPD). Pro residues predominate over residues 279-289 (KQPPPLAPQSP). The segment at 290-506 (PGVLGGGGSS…LDKESFLTWL (217 aa)) is transactivation domain. Residues 371 to 393 (GMSQELRTMTTSGSDPFLNSGTY) are compositionally biased toward polar residues. Residues 401–411 (DSGLSMSSYSV) are compositionally biased toward polar residues. Tyr-409 is modified (phosphotyrosine). A Phosphothreonine modification is found at Thr-414.

This sequence belongs to the YAP1 family. In terms of assembly, binds to the SH3 domain of the YES kinase. Binds to WBP1 and WBP2. Binds, in vitro, through the WW1 domain, to neural isoforms of ENAH that contain the PPSY motif. The phosphorylated form interacts with YWHAB. Interacts (via WW domains) with LATS1 (via PPxY motif 2). Interacts with LATS2. Interacts with TEAD1, TEAD2 and TEAD3. Interacts wih TEAD4. Interacts with TP73. Interacts with RUNX1. Interacts with HCK. Interacts (via WW domains) with PTPN14 (via PPxY motif 2); this interaction leads to the cytoplasmic sequestration of YAP1 and inhibits its transcriptional coactivator activity. Interacts (when phosphorylated at Ser-112) with SMAD2, SMAD3 and WWTR1. Interacts with PRRG2 (via cytoplasmic domain). Interacts (via WW domains) with PRRG4 (via cytoplasmic domain). Interacts (phosphorylated) with CLDN18; the interaction sequesters YAP1 away from the nucleus and thereby restricts transcription of YAP1 target genes. Interacts with SMAD1. Interacts with AMOT; the interaction facilitates translocation of YAP1 to the cytoplasm and tight junctions. Interacts with AMOTL2, the interaction is required for ubiquitination of AMOTL2 and localization of YAP1 to tight junctions. Post-translationally, phosphorylated by LATS1 and LATS2; leading to cytoplasmic translocation and inactivation. Phosphorylated by ABL1; leading to YAP1 stabilization, enhanced interaction with TP73 and recruitment onto proapoptotic genes; in response to DNA damage. Phosphorylation at Ser-402 and Ser-405 by CK1 is triggered by previous phosphorylation at Ser-399 by LATS proteins and leads to YAP1 ubiquitination by SCF(beta-TRCP) E3 ubiquitin ligase and subsequent degradation. Phosphorylated at Thr-118, Ser-137, Ser-369 and Thr-414 by MAPK8/JNK1 and MAPK9/JNK2, which is required for the regulation of apoptosis by YAP1. Phosphorylated in the nucleus by PRP4K; phosphorylation leads to nuclear exclusion. In terms of processing, ubiquitinated by SCF(beta-TRCP) E3 ubiquitin ligase.

The protein localises to the cytoplasm. The protein resides in the nucleus. Its subcellular location is the cell junction. It is found in the tight junction. Its function is as follows. Transcriptional regulator with dual roles as a coactivator and corepressor. Critical downstream regulatory target in the Hippo signaling pathway, crucial for organ size control and tumor suppression by restricting proliferation and promoting apoptosis. The Hippo signaling pathway core involves a kinase cascade featuring STK3/MST2 and STK4/MST1, along with its regulatory partner SAV1, which phosphorylates and activates LATS1/2 in complex with their regulatory protein, MOB1. This activation leads to the phosphorylation and inactivation of the YAP1 oncoprotein and WWTR1/TAZ. Phosphorylation of YAP1 by LATS1/2 prevents its nuclear translocation, thereby regulating the expression of its target genes. The transcriptional regulation of gene expression requires TEAD transcription factors and modulates cell growth, anchorage-independent growth, and induction of epithelial-mesenchymal transition (EMT). Plays a key role in tissue tension and 3D tissue shape by regulating the cortical actomyosin network, acting via ARHGAP18, a Rho GTPase activating protein that suppresses F-actin polymerization. It also suppresses ciliogenesis by acting as a transcriptional corepressor of TEAD4 target genes AURKA and PLK1. In conjunction with WWTR1, regulates TGFB1-dependent SMAD2 and SMAD3 nuclear accumulation. Synergizes with WBP2 to enhance PGR activity. This is Transcriptional coactivator YAP1 (YAP1) from Canis lupus familiaris (Dog).